Here is a 452-residue protein sequence, read N- to C-terminus: Bis(5'-adenosyl)-triphosphatase enpp4 (452 aa).

A signal peptide spans 1–19 (MFGRVFIVAVLYCITICKG). Residues 20-407 (EDPTNSSTPK…NQWCIQVSEA (388 aa)) are Extracellular-facing. The N-linked (GlcNAc...) asparagine glycan is linked to asparagine 24. 2 residues coordinate Zn(2+): aspartate 36 and threonine 72. The AMP-threonine intermediate role is filled by threonine 72. Asparagine 93 lines the substrate pocket. An N-linked (GlcNAc...) asparagine glycan is attached at asparagine 107. Substrate is bound at residue tyrosine 154. N-linked (GlcNAc...) asparagine glycosylation is found at asparagine 155 and asparagine 175. Residues aspartate 189 and histidine 193 each contribute to the Zn(2+) site. Aspartate 189 lines the substrate pocket. Asparagine 202 carries N-linked (GlcNAc...) asparagine glycosylation. The Zn(2+) site is built by aspartate 237 and histidine 238. Cysteine 254 and cysteine 287 form a disulfide bridge. 2 N-linked (GlcNAc...) asparagine glycosylation sites follow: asparagine 259 and asparagine 327. Histidine 336 contributes to the Zn(2+) binding site. N-linked (GlcNAc...) asparagine glycosylation is present at asparagine 386. Cysteine 394 and cysteine 401 are disulfide-bonded. Residues 408 to 428 (IGIVIGAIMVLTTLTCIIIML) form a helical membrane-spanning segment. Topologically, residues 429–452 (KKKMPSARPFSRLQFQDDDDPLIG) are cytoplasmic.

The protein belongs to the nucleotide pyrophosphatase/phosphodiesterase family. The cofactor is Zn(2+).

The protein resides in the cell membrane. The catalysed reaction is P(1),P(3)-bis(5'-adenosyl) triphosphate + H2O = AMP + ADP + 2 H(+). Hydrolyzes extracellular Ap3A into AMP and ADP, and Ap4A into AMP and ATP. Ap3A and Ap4A are diadenosine polyphosphates thought to induce proliferation of vascular smooth muscle cells. Acts as a procoagulant, mediating platelet aggregation at the site of nascent thrombus via release of ADP from Ap3A and activation of ADP receptors. The sequence is that of Bis(5'-adenosyl)-triphosphatase enpp4 (enpp4) from Xenopus laevis (African clawed frog).